A 513-amino-acid chain; its full sequence is Maturase K (513 aa).

The protein belongs to the intron maturase 2 family. MatK subfamily.

It localises to the plastid. The protein localises to the chloroplast. Usually encoded in the trnK tRNA gene intron. Probably assists in splicing its own and other chloroplast group II introns. The protein is Maturase K of Saccharum officinarum (Sugarcane).